The following is a 438-amino-acid chain: Prenyltransferase malE (438 aa).

Position 92 (Glu-92) interacts with substrate. Residues Arg-106, Lys-192, Tyr-194, Lys-259, Tyr-261, Tyr-346, and Tyr-411 each contribute to the dimethylallyl diphosphate site.

Belongs to the tryptophan dimethylallyltransferase family.

The catalysed reaction is (S)-3-(indol-3-ylmethyl)-6,7,8,8a-tetrahydropyrrolo[1,2-a]pyrazin-1-one + dimethylallyl diphosphate = (S)-3-{[2-(1,1-dimethylallyl)-indol-3-yl]methyl}-6,7,8,8a-tetrahydropyrrolo[1,2-a]pyrazin-1-one + diphosphate. The enzyme catalyses 1-hydroxy-3-(indol-3-ylmethyl)-6H,7H,8H-5lambda(5)-pyrrolo[1,2-a]pyrazine + dimethylallyl diphosphate = 1-hydroxy-3-{[2-(1,1-dimethylallyl)-indol-3-yl]methyl}-6H,7H,8H-5lambda(5)-pyrrolo[1,2-a]pyrazine + diphosphate. The protein operates within alkaloid biosynthesis. Its function is as follows. Prenyltransferase; part of the gene cluster that mediates the biosynthesis of malbrancheamide, a dichlorinated fungal indole alkaloid that belongs to a family of natural products containing a characteristic bicyclo[2.2.2]diazaoctane core. The first step of malbrancheamide biosynthesis involves coupling of L-proline and L-tryptophan by malG, a bimodular NRPS, to produce L-Pro-L-Trp aldehyde through reductive offloading. This compound undergoes spontaneous cyclization and dehydration to give a dienamine which is reverse prenylated at C-2 by malE. The other prenyltransferase present in the cluster, malB, displays modest activity, suggesting that may be a redundant gene in the pathway. Subsequently, a [4+2] Diels-Alder cyclo-addition catalyzed by the bifunctional enzyme malC forms the characteristic bicyclo[2.2.2]diazaoctane ring of premalbrancheamid. Finally, the flavin-dependent halogenase malA catalyzes the iterative dichlorination of the indole ring of premalbrancheamide to yield C-9 monochlorinated malbrancheamide B, C-8 monochlorinated isomalbrancheamide B, and dichlorinated malbrancheamide. MalA is also able to brominate premalbrancheamide at C-9 to yield malbrancheamide C, and, to a lesser extend, at C-8 to yield isomalbrancheamide C. Finally, malA can brominate C-9 monochlorinated malbrancheamide B at C-8 to yield malbrancheamide D, or C-8 monochlorinated isomalbrancheamide B at C-9 to produce isomalbrancheamide D. This is Prenyltransferase malE from Malbranchea aurantiaca.